Reading from the N-terminus, the 251-residue chain is MELPWLDLPFTLLTLLLATRLAYDYYGVVAATFTGSFSLQIFLFYCFARWYRHTIAARAAADADGDGGGGAVADEEAAPPVLIPLLEGRGGGGGGAGAASSLANRCFAVVFMVFVPLVIVVFERSQADVVAYALCLANILVMVVWLSPDAAADPASAAKSFLRLSDDEDEGSCSGSGHGAAEDKCCVCLAGMREAQALRDLPRCGHRFHAKCIGKWLTAHPTCPVCRTTAVPPPAPLPASGDHADDAITPV.

3 helical membrane passes run 28–48 (VVAA…YCFA), 102–122 (LANR…IVVF), and 127–147 (ADVV…VWLS). The segment at 185–227 (CCVCLAGMREAQALRDLPRCGHRFHAKCIGKWLTAHPTCPVCR) adopts an RING-type; atypical zinc-finger fold.

The protein resides in the membrane. The enzyme catalyses S-ubiquitinyl-[E2 ubiquitin-conjugating enzyme]-L-cysteine + [acceptor protein]-L-lysine = [E2 ubiquitin-conjugating enzyme]-L-cysteine + N(6)-ubiquitinyl-[acceptor protein]-L-lysine.. The protein operates within protein modification; protein ubiquitination. Its function is as follows. Possesses E3 ubiquitin-protein ligase in vitro. This Oryza sativa subsp. japonica (Rice) protein is E3 ubiquitin-protein ligase Os06g0535400.